A 56-amino-acid polypeptide reads, in one-letter code: Small ribosomal subunit protein uS14 (56 aa).

Zn(2+) is bound by residues Cys-21, Cys-24, Cys-39, and Cys-42.

Belongs to the universal ribosomal protein uS14 family. Requires Zn(2+) as cofactor.

This is Small ribosomal subunit protein uS14 (RPS29) from Triticum aestivum (Wheat).